The sequence spans 1407 residues: DNA-directed RNA polymerase subunit beta' (1407 aa).

Residues C70, C72, C85, and C88 each coordinate Zn(2+). The Mg(2+) site is built by D460, D462, and D464. The Zn(2+) site is built by C814, C888, C895, and C898.

The protein belongs to the RNA polymerase beta' chain family. As to quaternary structure, the RNAP catalytic core consists of 2 alpha, 1 beta, 1 beta' and 1 omega subunit. When a sigma factor is associated with the core the holoenzyme is formed, which can initiate transcription. Requires Mg(2+) as cofactor. Zn(2+) is required as a cofactor.

The enzyme catalyses RNA(n) + a ribonucleoside 5'-triphosphate = RNA(n+1) + diphosphate. In terms of biological role, DNA-dependent RNA polymerase catalyzes the transcription of DNA into RNA using the four ribonucleoside triphosphates as substrates. The polypeptide is DNA-directed RNA polymerase subunit beta' (Cronobacter sakazakii (strain ATCC BAA-894) (Enterobacter sakazakii)).